A 217-amino-acid chain; its full sequence is Adenylate kinase (217 aa).

10–15 serves as a coordination point for ATP; it reads GSGKGT. An NMP region spans residues 30–59; that stretch reads STGDLLRAAVAAGSELGKQAKAAMDAGELV. Residues T31, R36, 57-59, 85-88, and Q92 contribute to the AMP site; these read ELV and GFPR. Residues 126–164 are LID; it reads GRRTCQACGAIYNIYFSPPEVDHRCDKCNSDQLVQRSDD. Position 127 (R127) interacts with ATP. 2 residues coordinate Zn(2+): C130 and C133. ATP is bound at residue 136–137; it reads IY. C150 and C153 together coordinate Zn(2+). AMP is bound by residues R161 and R172. D200 serves as a coordination point for ATP.

This sequence belongs to the adenylate kinase family. In terms of assembly, monomer.

The protein resides in the cytoplasm. It carries out the reaction AMP + ATP = 2 ADP. Its pathway is purine metabolism; AMP biosynthesis via salvage pathway; AMP from ADP: step 1/1. In terms of biological role, catalyzes the reversible transfer of the terminal phosphate group between ATP and AMP. Plays an important role in cellular energy homeostasis and in adenine nucleotide metabolism. This chain is Adenylate kinase, found in Nitrosococcus oceani (strain ATCC 19707 / BCRC 17464 / JCM 30415 / NCIMB 11848 / C-107).